The sequence spans 601 residues: COP9 signalosome complex subunit 1 (601 aa).

Acidic residues predominate over residues methionine 1–methionine 10. 2 disordered regions span residues methionine 1 to proline 54 and aspartate 268 to valine 294. Over residues alanine 14–glutamate 24 the composition is skewed to low complexity. Residues threonine 338–aspartate 500 enclose the PCI domain. The segment at serine 535–asparagine 581 is disordered.

Belongs to the CSN1 family. In terms of assembly, component of the CSN complex, probably composed of csn-1, csn-2, csn-3, csn-4, csn-5, csn-6 and csn-7. Within the complex it probably interacts directly with csn-2, csn-4 and csn-5. May interact with itself. Interacts with rbx-1.

It localises to the cytoplasm. The protein resides in the nucleus. In terms of biological role, essential component of the COP9 signalosome complex (CSN), a complex involved in various cellular and developmental processes. The CSN complex is an essential regulator of the ubiquitin (Ubl) conjugation pathway by mediating the deneddylation of the cullin subunits of the SCF-type E3 ligase complexes, leading to decrease the Ubl ligase activity of SCF. The CSN complex plays an essential role in embryogenesis and oogenesis and is required to regulate microtubule stability in the early embryo. Mediates mei-3/katanin targeting for degradation at the meiosis to mitosis transition via deneddylation of cul-3. The chain is COP9 signalosome complex subunit 1 (csn-1) from Caenorhabditis elegans.